The chain runs to 101 residues: Small ribosomal subunit protein bS18c (101 aa).

Over residues 1–19 the composition is skewed to basic residues; it reads MDKSKRLFRKSKRSFRRRL. Positions 1–23 are disordered; it reads MDKSKRLFRKSKRSFRRRLPPIG.

Belongs to the bacterial ribosomal protein bS18 family. Part of the 30S ribosomal subunit.

It localises to the plastid. Its subcellular location is the chloroplast. This is Small ribosomal subunit protein bS18c from Liriodendron tulipifera (Tuliptree).